The sequence spans 252 residues: Chlorophyll a-b binding protein P4, chloroplastic (252 aa).

Trp56 contributes to the chlorophyll b binding site. Residues Phe76 and Glu95 each contribute to the chlorophyll a site. Chlorophyll b is bound at residue Arg100. 2 helical membrane-spanning segments follow: residues 101-121 and 134-154; these read WAML…IGII and YFAS…YVEI. 4 residues coordinate chlorophyll b: Ser137, Val143, Glu153, and Arg156. Chlorophyll a contacts are provided by Lys203, Glu204, Asn207, Arg209, Gln221, and His236.

Belongs to the light-harvesting chlorophyll a/b-binding (LHC) protein family. In terms of assembly, the LHC complex consists of chlorophyll a-b binding proteins. Binds at least 14 chlorophylls (8 Chl-a and 6 Chl-b) and carotenoids such as lutein and neoxanthin. is required as a cofactor. Photoregulated by reversible phosphorylation of its threonine residues.

It is found in the plastid. The protein resides in the chloroplast thylakoid membrane. Functionally, the light-harvesting complex (LHC) functions as a light receptor, it captures and delivers excitation energy to photosystems with which it is closely associated. May channel protons produced in the catalytic Mn center of water oxidation into the thylakoid lumen. The chain is Chlorophyll a-b binding protein P4, chloroplastic from Pisum sativum (Garden pea).